Consider the following 375-residue polypeptide: Secreted LysM effector Vd4LysM (375 aa).

The N-terminal stretch at 1-24 is a signal peptide; sequence MPSVTISSTMLAGLLLMLVPASSA. Residues 57-104 form the LysM 1 domain; the sequence is SWWWDNEGQIPCANMPAEWGITMQDFLRWNPSITSSCGNFLNGRSYCV. The interval 108–139 is disordered; it reads GEEPPVPGTPTTTTAPATTTKPSNGITTPQPI. Residues 116 to 129 are compositionally biased toward low complexity; the sequence is TPTTTTAPATTTKP. Positions 149-195 constitute a LysM 2 domain; sequence KFHYISEGDRCQDILSYQKITLADFFKWNPAVKSDCSGLWSKTNACV. Positions 206-217 are enriched in low complexity; sequence TTTTKPATPTTP. The interval 206-225 is disordered; it reads TTTTKPATPTTPSNGITTPQ. In terms of domain architecture, LysM 3 spans 237-283; it reads KFHYISEGDRCQDILSYQKITQADFFKWNPAVKSDCSGLWSKTHACV. Residues 287 to 317 are disordered; that stretch reads GGQAPPPTPTTTKPTTTKPPGNGVTTPTPTQ. Residues 296–317 are compositionally biased toward low complexity; it reads TTTKPTTTKPPGNGVTTPTPTQ. In terms of domain architecture, LysM 4 spans 326–372; the sequence is KFHFVSPGNTCQQIVSYQKITMANFVKWNSGAGSGCNNLWGNTHACV.

This sequence belongs to the secreted LysM effector family.

In terms of biological role, might have a role in sequestration of chitin oligosaccharides (breakdown products of fungal cell walls that are released during invasion and act as triggers of host immunity) to dampen host defense. Does not play an important role during host colonization. This Verticillium dahliae (strain VdLs.17 / ATCC MYA-4575 / FGSC 10137) (Verticillium wilt) protein is Secreted LysM effector Vd4LysM.